The following is a 465-amino-acid chain: Ribulose bisphosphate carboxylase large chain (465 aa).

The residue at position 4 (lysine 4) is an N6,N6,N6-trimethyllysine. Positions 113 and 163 each coordinate substrate. Residue lysine 165 is the Proton acceptor of the active site. Residue lysine 167 coordinates substrate. Residues lysine 191, aspartate 193, and glutamate 194 each coordinate Mg(2+). Lysine 191 carries the post-translational modification N6-carboxylysine. Residue histidine 284 is the Proton acceptor of the active site. Substrate contacts are provided by arginine 285, histidine 317, and serine 369.

It belongs to the RuBisCO large chain family. Type I subfamily. As to quaternary structure, heterohexadecamer of 8 large chains and 8 small chains; disulfide-linked. The disulfide link is formed within the large subunit homodimers. It depends on Mg(2+) as a cofactor. Post-translationally, the disulfide bond which can form in the large chain dimeric partners within the hexadecamer appears to be associated with oxidative stress and protein turnover.

The protein localises to the plastid. Its subcellular location is the chloroplast. It carries out the reaction 2 (2R)-3-phosphoglycerate + 2 H(+) = D-ribulose 1,5-bisphosphate + CO2 + H2O. The catalysed reaction is D-ribulose 1,5-bisphosphate + O2 = 2-phosphoglycolate + (2R)-3-phosphoglycerate + 2 H(+). RuBisCO catalyzes two reactions: the carboxylation of D-ribulose 1,5-bisphosphate, the primary event in carbon dioxide fixation, as well as the oxidative fragmentation of the pentose substrate in the photorespiration process. Both reactions occur simultaneously and in competition at the same active site. The chain is Ribulose bisphosphate carboxylase large chain from Bursera inaguensis (Elaphrium inaguense).